The following is a 202-amino-acid chain: Small ribosomal subunit protein uS4 (202 aa).

The tract at residues 15-43 (LGDLPGLTRKAAKRSNPPGQHGNARRKRS) is disordered. The region spanning 90–152 (GRLDNVCFRL…KGSKKLAEGN (63 aa)) is the S4 RNA-binding domain.

The protein belongs to the universal ribosomal protein uS4 family. As to quaternary structure, part of the 30S ribosomal subunit. Contacts protein S5. The interaction surface between S4 and S5 is involved in control of translational fidelity.

In terms of biological role, one of the primary rRNA binding proteins, it binds directly to 16S rRNA where it nucleates assembly of the body of the 30S subunit. Its function is as follows. With S5 and S12 plays an important role in translational accuracy. The sequence is that of Small ribosomal subunit protein uS4 from Prochlorococcus marinus (strain SARG / CCMP1375 / SS120).